A 113-amino-acid chain; its full sequence is MKITLSKRIGLLAILLPCALALSTTVHAETNKLVIESGDSAQSRQHAAMEKEQWNDTRNLRQKVNKRTEKEWDKADAAFDNRDKCEQSANINAYWEPNTLRCLDRRTGRVITP.

Residues 1 to 28 form the signal peptide; the sequence is MKITLSKRIGLLAILLPCALALSTTVHA.

The protein belongs to the UPF0482 family.

This chain is UPF0482 protein YnfB, found in Escherichia coli O8 (strain IAI1).